Reading from the N-terminus, the 342-residue chain is Protein RecA (342 aa).

65 to 72 (GPESSGKT) is an ATP binding site.

Belongs to the RecA family.

It is found in the cytoplasm. Functionally, can catalyze the hydrolysis of ATP in the presence of single-stranded DNA, the ATP-dependent uptake of single-stranded DNA by duplex DNA, and the ATP-dependent hybridization of homologous single-stranded DNAs. It interacts with LexA causing its activation and leading to its autocatalytic cleavage. This is Protein RecA from Caldanaerobacter subterraneus subsp. tengcongensis (strain DSM 15242 / JCM 11007 / NBRC 100824 / MB4) (Thermoanaerobacter tengcongensis).